Reading from the N-terminus, the 425-residue chain is Orexin/Hypocretin receptor type 1 (425 aa).

The disordered stretch occupies residues Met1–Pro25. Topologically, residues Met1–Glu46 are extracellular. The segment at Asp26–Tyr41 is required for response to orexin-A. The chain crosses the membrane as a helical span at residues Trp47–Val67. The Cytoplasmic segment spans residues Cys68–Asn82. A helical transmembrane segment spans residues Tyr83–Leu105. Residues Val106–Cys119 lie on the Extracellular side of the membrane. A disulfide bridge links Cys119 with Cys202. The helical transmembrane segment at Lys120 to Ile140 threads the bilayer. Residues Ala141 to Arg160 lie on the Cytoplasmic side of the membrane. The helical transmembrane segment at Ala161–Val182 threads the bilayer. The Extracellular segment spans residues Met183 to Lys213. Asn194 carries N-linked (GlcNAc...) asparagine glycosylation. The helical transmembrane segment at Ile214–Tyr235 threads the bilayer. At Phe236–Lys298 the chain is on the cytoplasmic side. Residues Met299–Lys321 form a helical membrane-spanning segment. The Extracellular segment spans residues Arg322–Val336. A helical membrane pass occupies residues Tyr337–Phe360. Topologically, residues Leu361–Pro425 are cytoplasmic.

This sequence belongs to the G-protein coupled receptor 1 family.

Its subcellular location is the cell membrane. In terms of biological role, moderately selective excitatory receptor for orexin-A and, with a lower affinity, for orexin-B neuropeptide. Triggers an increase in cytoplasmic Ca(2+) levels in response to orexin-A binding. The polypeptide is Orexin/Hypocretin receptor type 1 (Bos taurus (Bovine)).